A 487-amino-acid chain; its full sequence is Cytochrome c-552 (487 aa).

The N-terminal stretch at 1–27 (MSKKWTRNTAAMAAILSALCLSTNALA) is a signal peptide. His104 lines the heme c pocket. Heme contacts are provided by Cys132, Cys135, and Lys136. Positions 170, 173, 174, 219, 222, and 223 each coordinate heme c. Glu225, Tyr226, Lys271, and Gln273 together coordinate Ca(2+). Position 226 (Tyr226) interacts with substrate. His274 contacts substrate. Residues His285, Cys292, Cys295, His296, His311, Cys324, Cys327, His328, and His403 each contribute to the heme c site.

It belongs to the cytochrome c-552 family. The cofactor is Ca(2+). Requires heme c as cofactor.

It is found in the periplasm. The enzyme catalyses 6 Fe(III)-[cytochrome c] + NH4(+) + 2 H2O = 6 Fe(II)-[cytochrome c] + nitrite + 8 H(+). Its pathway is nitrogen metabolism; nitrate reduction (assimilation). Catalyzes the reduction of nitrite to ammonia, consuming six electrons in the process. This chain is Cytochrome c-552, found in Photobacterium profundum (strain SS9).